The chain runs to 451 residues: Putative metabolite transport protein YyaJ (451 aa).

Topologically, residues 1–29 (MNTIFKQKNTHPFSNAANRLDRLPISRVH) are cytoplasmic. A helical membrane pass occupies residues 30–50 (FQVLTALGIVYFFDLADLFTL). The Extracellular segment spans residues 51–60 (SNVAPALIEH). Residues 61-81 (WGIPLSTIANVTAASFLGMFL) traverse the membrane as a helical segment. At 82 to 97 (GASLGGRLSDRIGRKK) the chain is on the cytoplasmic side. A helical membrane pass occupies residues 98–118 (ALNLFVFVFSIASLCNAAAWD). The Extracellular portion of the chain corresponds to 119–124 (IPSLMT). The helical transmembrane segment at 125 to 145 (FRFLTGFGVAAAMVITNSYLA) threads the bilayer. The Cytoplasmic segment spans residues 146–157 (EFFPSSVRGKYI). The chain crosses the membrane as a helical span at residues 158 to 178 (SFCAMIGLIGVPITNIVSAFV). Residues 179–182 (IPLG) are Extracellular-facing. Residues 183 to 203 (SWGWRLVFVWGAVGLIYFFFI) form a helical membrane-spanning segment. Residues 204–270 (HRLEESPRWH…LLKGRNLKIT (67 aa)) lie on the Cytoplasmic side of the membrane. A helical membrane pass occupies residues 271–291 (IVLSAVWIFETFGFYGFASWV). The Extracellular segment spans residues 292 to 305 (PSLLKSNGVTMENT). Residues 306 to 326 (LWYNVLHSVGAPLGALLGSMI) traverse the membrane as a helical segment. The Cytoplasmic portion of the chain corresponds to 327–333 (SERFQRK). Residues 334–354 (WILAASAFLTAIAGLLYGMTF) form a helical membrane-spanning segment. Residues 355 to 357 (IPI) are Extracellular-facing. The helical transmembrane segment at 358–378 (MIIVFGFIVNITERVFTSNLY) threads the bilayer. The Cytoplasmic portion of the chain corresponds to 379 to 396 (AYTSEPYPTEYRSSGSGL). A helical transmembrane segment spans residues 397–417 (AYGLGRFSNIFGSLLVGFIAV). Topologically, residues 418–421 (QLGY) are extracellular. Residues 422–442 (ISVFLFIGGCWLACSLLLIFF) traverse the membrane as a helical segment. The Cytoplasmic portion of the chain corresponds to 443–451 (GPNTNAKQI).

Belongs to the major facilitator superfamily. Sugar transporter (TC 2.A.1.1) family.

It is found in the cell membrane. This chain is Putative metabolite transport protein YyaJ (yyaJ), found in Bacillus subtilis (strain 168).